The following is a 342-amino-acid chain: L-threonine 3-dehydrogenase (342 aa).

Residue cysteine 38 participates in Zn(2+) binding. Catalysis depends on charge relay system residues threonine 40 and histidine 43. Positions 63, 64, 93, 96, 99, and 107 each coordinate Zn(2+). Residues isoleucine 175, aspartate 195, arginine 200, 262-264 (LGL), and 286-287 (IY) contribute to the NAD(+) site.

This sequence belongs to the zinc-containing alcohol dehydrogenase family. In terms of assembly, homotetramer. Zn(2+) is required as a cofactor.

The protein resides in the cytoplasm. It carries out the reaction L-threonine + NAD(+) = (2S)-2-amino-3-oxobutanoate + NADH + H(+). Its pathway is amino-acid degradation; L-threonine degradation via oxydo-reductase pathway; glycine from L-threonine: step 1/2. Catalyzes the NAD(+)-dependent oxidation of L-threonine to 2-amino-3-ketobutyrate. This is L-threonine 3-dehydrogenase from Streptomyces coelicolor (strain ATCC BAA-471 / A3(2) / M145).